We begin with the raw amino-acid sequence, 286 residues long: Cytochrome c oxidase subunit 3 (286 aa).

8 helical membrane-spanning segments follow: residues 13–33, 40–60, 85–105, 133–153, 173–195, 199–221, 223–243, and 253–273; these read GVFLFLSYTPLYITYLLGVVI, VGTFAITLDIILCILVVCFLI, IIQYCFLWFVFSEFMLFVVFF, IILDLGYIFYWFLFDFFNIIL, LCREYLLSKIILGSSIFLGLLFI, VWEFNILIITLSVNIFCTILFSI, TLHFMHVLVGIVFMIISIFNI, and IVLIVCIIFYWHFVDIVWFFL.

This sequence belongs to the cytochrome c oxidase subunit 3 family. Component of the cytochrome c oxidase (complex IV, CIV), a multisubunit enzyme composed of a catalytic core of 3 subunits and several supernumerary subunits. The complex exists as a monomer or a dimer and forms supercomplexes (SCs) in the inner mitochondrial membrane with ubiquinol-cytochrome c oxidoreductase (cytochrome b-c1 complex, complex III, CIII).

It is found in the mitochondrion inner membrane. It catalyses the reaction 4 Fe(II)-[cytochrome c] + O2 + 8 H(+)(in) = 4 Fe(III)-[cytochrome c] + 2 H2O + 4 H(+)(out). Functionally, component of the cytochrome c oxidase, the last enzyme in the mitochondrial electron transport chain which drives oxidative phosphorylation. The respiratory chain contains 3 multisubunit complexes succinate dehydrogenase (complex II, CII), ubiquinol-cytochrome c oxidoreductase (cytochrome b-c1 complex, complex III, CIII) and cytochrome c oxidase (complex IV, CIV), that cooperate to transfer electrons derived from NADH and succinate to molecular oxygen, creating an electrochemical gradient over the inner membrane that drives transmembrane transport and the ATP synthase. Cytochrome c oxidase is the component of the respiratory chain that catalyzes the reduction of oxygen to water. Electrons originating from reduced cytochrome c in the intermembrane space (IMS) are transferred via the dinuclear copper A center (CU(A)) of subunit 2 and heme A of subunit 1 to the active site in subunit 1, a binuclear center (BNC) formed by heme A3 and copper B (CU(B)). The BNC reduces molecular oxygen to 2 water molecules using 4 electrons from cytochrome c in the IMS and 4 protons from the mitochondrial matrix. This Trypanoplasma borreli protein is Cytochrome c oxidase subunit 3 (COIII).